A 491-amino-acid chain; its full sequence is Probable malate:quinone oxidoreductase (491 aa).

It belongs to the MQO family. FAD serves as cofactor.

The catalysed reaction is (S)-malate + a quinone = a quinol + oxaloacetate. It participates in carbohydrate metabolism; tricarboxylic acid cycle; oxaloacetate from (S)-malate (quinone route): step 1/1. This chain is Probable malate:quinone oxidoreductase, found in Actinobacillus pleuropneumoniae serotype 5b (strain L20).